Consider the following 155-residue polypeptide: SsrA-binding protein (155 aa).

Belongs to the SmpB family.

Its subcellular location is the cytoplasm. Functionally, required for rescue of stalled ribosomes mediated by trans-translation. Binds to transfer-messenger RNA (tmRNA), required for stable association of tmRNA with ribosomes. tmRNA and SmpB together mimic tRNA shape, replacing the anticodon stem-loop with SmpB. tmRNA is encoded by the ssrA gene; the 2 termini fold to resemble tRNA(Ala) and it encodes a 'tag peptide', a short internal open reading frame. During trans-translation Ala-aminoacylated tmRNA acts like a tRNA, entering the A-site of stalled ribosomes, displacing the stalled mRNA. The ribosome then switches to translate the ORF on the tmRNA; the nascent peptide is terminated with the 'tag peptide' encoded by the tmRNA and targeted for degradation. The ribosome is freed to recommence translation, which seems to be the essential function of trans-translation. This Bordetella parapertussis (strain 12822 / ATCC BAA-587 / NCTC 13253) protein is SsrA-binding protein.